Here is a 508-residue protein sequence, read N- to C-terminus: D-alanine--D-alanyl carrier protein ligase (508 aa).

152 to 153 (TS) is an ATP binding site. D198 contacts D-alanine. 293–298 (NTYGPT) is a binding site for ATP. Residue V302 participates in D-alanine binding. ATP is bound by residues D384, 396-399 (YRGR), and K495. K495 is a D-alanine binding site.

Belongs to the ATP-dependent AMP-binding enzyme family. DltA subfamily.

The protein localises to the cytoplasm. It carries out the reaction holo-[D-alanyl-carrier protein] + D-alanine + ATP = D-alanyl-[D-alanyl-carrier protein] + AMP + diphosphate. It functions in the pathway cell wall biogenesis; lipoteichoic acid biosynthesis. In terms of biological role, catalyzes the first step in the D-alanylation of lipoteichoic acid (LTA), the activation of D-alanine and its transfer onto the D-alanyl carrier protein (Dcp) DltC. In an ATP-dependent two-step reaction, forms a high energy D-alanyl-AMP intermediate, followed by transfer of the D-alanyl residue as a thiol ester to the phosphopantheinyl prosthetic group of the Dcp. D-alanylation of LTA plays an important role in modulating the properties of the cell wall in Gram-positive bacteria, influencing the net charge of the cell wall. The sequence is that of D-alanine--D-alanyl carrier protein ligase from Lactiplantibacillus plantarum (strain ATCC BAA-793 / NCIMB 8826 / WCFS1) (Lactobacillus plantarum).